The following is a 394-amino-acid chain: MSKEKFQRTKLHINVGTIGHVDHGKTTLTAAITAVLAKAYGGNALAFDQIDNAPEEKARGITINTSHVEYDTKNRHYAHVDCPGHADYVKNMITGAAQMDGAILVVAATDGPMPQTREHILLARQVGVPYIIVFINKCDMVDDSELLELVEIEVRELLSQYEFPGENTPIIRGSALKALEHDVDWTSKIIELAEVLDSYIPEPKRAIDKPFLLPIEDVFSISGRGTVVTGRVERGILKVGEEVEIIGIKNTTKTTCTGVEMFRKLLDEGRAGENIGVLLRGVKRDDVERGQVLAKPGSIKPHTKFASEVYILNKDEGGRHTPFFKGYRPQFYFRTTDVTGTIELPIDVEMVMPGDNIKMIVNLIAPIAMDQGLRFAIREGGRTVGAGIVTDIIE.

The tr-type G domain occupies 10–204 (KLHINVGTIG…VLDSYIPEPK (195 aa)). A G1 region spans residues 19-26 (GHVDHGKT). 19 to 26 (GHVDHGKT) provides a ligand contact to GTP. Position 26 (Thr26) interacts with Mg(2+). A G2 region spans residues 60–64 (GITIN). Positions 81-84 (DCPG) are G3. GTP is bound by residues 81–85 (DCPGH) and 136–139 (NKCD). Positions 136 to 139 (NKCD) are G4. The G5 stretch occupies residues 174 to 176 (SAL).

The protein belongs to the TRAFAC class translation factor GTPase superfamily. Classic translation factor GTPase family. EF-Tu/EF-1A subfamily. As to quaternary structure, monomer.

It is found in the cytoplasm. The catalysed reaction is GTP + H2O = GDP + phosphate + H(+). Functionally, GTP hydrolase that promotes the GTP-dependent binding of aminoacyl-tRNA to the A-site of ribosomes during protein biosynthesis. This Baumannia cicadellinicola subsp. Homalodisca coagulata protein is Elongation factor Tu.